Here is a 663-residue protein sequence, read N- to C-terminus: Leishmanolysin-like peptidase (663 aa).

Histidine 246 provides a ligand contact to Zn(2+). Glutamate 247 is a catalytic residue. Positions 250 and 353 each coordinate Zn(2+).

This sequence belongs to the peptidase M8 family. The cofactor is Zn(2+).

It localises to the cytoplasm. Metalloprotease. The sequence is that of Leishmanolysin-like peptidase from Caenorhabditis briggsae.